A 317-amino-acid polypeptide reads, in one-letter code: Pantothenate kinase (317 aa).

Position 95–102 (95–102 (GSVAVGKS)) interacts with ATP.

Belongs to the prokaryotic pantothenate kinase family.

The protein localises to the cytoplasm. It catalyses the reaction (R)-pantothenate + ATP = (R)-4'-phosphopantothenate + ADP + H(+). The protein operates within cofactor biosynthesis; coenzyme A biosynthesis; CoA from (R)-pantothenate: step 1/5. In Myxococcus xanthus (strain DK1622), this protein is Pantothenate kinase.